The chain runs to 670 residues: Putative segment polarity protein dishevelled homolog DVL1P1 (670 aa).

The 85-residue stretch at 1–85 (MAETKIIYHM…RVVSWLVLVE (85 aa)) folds into the DIX domain. Residues 89 to 240 (SDAGSQGTDS…ADRASSFSSM (152 aa)) form a disordered region. A compositionally biased stretch (basic residues) spans 142 to 151 (SHRRDRARRR). Basic and acidic residues predominate over residues 152–171 (NREEAARTNGHPRGDRRRDV). Composition is skewed to low complexity over residues 176 to 192 (DSAS…SSFV) and 201 to 214 (SRLS…TSSR). Over residues 215–228 (LIRKHKRRRRKQRL) the composition is skewed to basic residues. The PDZ domain maps to 251 to 323 (TVTLNMERHH…NDDAVRVLRE (73 aa)). In terms of domain architecture, DEP spans 400–474 (PDSGLEIRDR…SEQCYYVFGD (75 aa)). Positions 518-642 (PGPPPCFPPA…PGGPPVRELA (125 aa)) are disordered. 2 stretches are compositionally biased toward low complexity: residues 526-553 (PAYQ…SSGS) and 600-614 (SRGS…SYAP).

It belongs to the DSH family. As to expression, expressed in thymus, heart, liver, kidney, brain, skeletal muscle, and pancreas.

It is found in the cytoplasm. May play a role in the signal transduction pathway mediated by multiple Wnt genes. The chain is Putative segment polarity protein dishevelled homolog DVL1P1 (DVL1P1) from Homo sapiens (Human).